Consider the following 122-residue polypeptide: Large ribosomal subunit protein uL14 (122 aa).

This sequence belongs to the universal ribosomal protein uL14 family. Part of the 50S ribosomal subunit. Forms a cluster with proteins L3 and L19. In the 70S ribosome, L14 and L19 interact and together make contacts with the 16S rRNA in bridges B5 and B8.

In terms of biological role, binds to 23S rRNA. Forms part of two intersubunit bridges in the 70S ribosome. This chain is Large ribosomal subunit protein uL14, found in Afipia carboxidovorans (strain ATCC 49405 / DSM 1227 / KCTC 32145 / OM5) (Oligotropha carboxidovorans).